The primary structure comprises 113 residues: Large ribosomal subunit protein uL24 (113 aa).

The protein belongs to the universal ribosomal protein uL24 family. Part of the 50S ribosomal subunit.

One of two assembly initiator proteins, it binds directly to the 5'-end of the 23S rRNA, where it nucleates assembly of the 50S subunit. In terms of biological role, one of the proteins that surrounds the polypeptide exit tunnel on the outside of the subunit. The polypeptide is Large ribosomal subunit protein uL24 (Rickettsia prowazekii (strain Madrid E)).